A 229-amino-acid chain; its full sequence is GTP cyclohydrolase 1 (229 aa).

Residues 1–26 (MDAKIKPIRGTNPAEGRPEFQPAELE) form a disordered region. Zn(2+)-binding residues include Cys118, His121, and Cys189.

It belongs to the GTP cyclohydrolase I family. Toroid-shaped homodecamer, composed of two pentamers of five dimers.

It catalyses the reaction GTP + H2O = 7,8-dihydroneopterin 3'-triphosphate + formate + H(+). It participates in cofactor biosynthesis; 7,8-dihydroneopterin triphosphate biosynthesis; 7,8-dihydroneopterin triphosphate from GTP: step 1/1. The protein is GTP cyclohydrolase 1 of Rhodopseudomonas palustris (strain ATCC BAA-98 / CGA009).